A 403-amino-acid chain; its full sequence is Cytochrome P450 monooxygenase ustC (403 aa).

An N-terminal signal peptide occupies residues 1–18 (MSPFIFAVTLTFAILALG). 2 N-linked (GlcNAc...) asparagine glycosylation sites follow: Asn-52 and Asn-92. A heme-binding site is contributed by Cys-318.

It belongs to the cytochrome P450 family. Heme is required as a cofactor.

It participates in mycotoxin biosynthesis. Functionally, cytochrome P450 monooxygenase; part of the gene cluster that mediates the biosynthesis of the secondary metabolite ustiloxin B, an antimitotic tetrapeptide. First, ustA is processed by the subtilisin-like endoprotease Kex2 that is outside the ustiloxin B gene cluster, at the C-terminal side of Arg-Lys, after transfer to Golgi apparatus through the endoplasmic reticulum (ER). Cleavage by KEX2 generates 16 peptides YAIG-I to YAIG-XVI. To process the precursor peptide further, at least two peptidases are necessary to cleave the N-terminal and C-terminal sides of the Tyr-Ala-Ile-Gly core peptide which serves as backbone for the synthesis of ustiloxin B, through cyclization and modification of the tyrosine with a non-protein coding amino acid, norvaline. One of the two peptidases must be the serine peptidase ustP; and the other pepdidase is probably ustH. Macrocyclization of the core peptide derived from ustA requires the tyrosinase ustQ, as well as the homologous oxidases ustYa and ustYb, and leads to the production of the first cyclization product N-desmethylustiloxin F. For the formation of N-desmethylustiloxin F, three oxidation steps are required, hydroxylation at the benzylic position, hydroxylation at either the aromatic ring of Tyr or beta-position of Ile, and oxidative cyclization. UstQ may catalyze the oxidation of a phenol moiety, whereas the ustYa and ustYb are most likely responsible for the remaining two-step oxidations. N-desmethylustiloxin F is then methylated by ustM to yield ustiloxin F which in turn substrate of the cytochrome P450 monooxygenase ustC which catalyzes the formation of S-deoxyustiloxin H. The flavoprotein monooxygenases ustF1 and ustF2 then participate in the modification of the side chain of S-deoxyustiloxin H, leading to the synthesis of an oxime intermediate, via ustiloxin H. Finally, carboxylative dehydration performed by the cysteine desulfurase-like protein ustD yields ustiloxin B. The polypeptide is Cytochrome P450 monooxygenase ustC (Aspergillus flavus (strain ATCC 200026 / FGSC A1120 / IAM 13836 / NRRL 3357 / JCM 12722 / SRRC 167)).